The chain runs to 668 residues: WD repeat-containing protein 48 homolog (668 aa).

8 WD repeats span residues 26 to 65 (QHRNGVNALQLDANNGKLYSAGRDAIIRVWNTRTDSSEKY), 71 to 110 (HHNDWVNDIVLCCNGRNLISASCDTTVKVWNAQKGFCMST), 113 to 152 (THRDYVQALAYAKDREQVASAGLDKAIFLWDVNTLTALTA), 164 to 203 (GSKDSIYSLAMNPSGTVIVSGSTENILRIWDPRTCMRRMK), 206 to 245 (GHTENVRCLVVSPDGNQVVSGSSDGTIKVWNLGQQRCVQT), 248 to 287 (VHKEGVWSLLMSENFQYIISGSRDRNIIVTEMRNPSNKTL), 290 to 329 (EEQAPVLSLGYNIDKTGVWATTWNSDIRCWKLPMYDRCTL), and 350 to 389 (KGGAAIKECAVLNDKRYIITKDSQDQVVVYDVLRVVKKEQ). The tract at residues 592–616 (ETTPSGGNANNSLQNSQSDANSEGS) is disordered.

The protein belongs to the WD repeat WDR48 family. Catalytic component of the Usp12-46 deubiquitylase complex consisting of Usp12-46, Wdr20 and Uaf1; regulatory subunit that, together wtih Wdr20, stabilizes Usp12-46. The Usp12-46 deubiquitylase complex associates with arr/arrow; the interaction leads to deubiquitination and stabilization of arr/arrow.

Its function is as follows. Regulatory component of the Usp12-46 deubiquitylase complex. activates deubiquitination by increasing the catalytic turnover without increasing the affinity of deubiquitinating enzymes for the substrate. The complex deubiquitylates the wg/wingless-signaling receptor arr/arrow, which stabilizes the receptor and increases its concentration at the cell surface; this enhances the sensitivity of cells to wg/wingless-signal stimulation. This increases the amplitude and spatial range of the signaling response to the wg/wingless morphogen gradient, facilitating the precise concentration-dependent regulation of its target genes. Together with Wdr20 and Usp12-46 required for wg/wingless-mediated signaling in the wing imaginal disc and for wg/wingless-dependent regulation of intestinal stem cell proliferation. The polypeptide is WD repeat-containing protein 48 homolog (Drosophila melanogaster (Fruit fly)).